Here is a 397-residue protein sequence, read N- to C-terminus: G2/mitotic-specific cyclin-B1 (397 aa).

It belongs to the cyclin family. Cyclin AB subfamily. Interacts with the cdc2 protein kinase to form a serine/threonine kinase holoenzyme complex also known as maturation promoting factor (MPF). The cyclin subunit imparts substrate specificity to the complex. When not in a complex with cdc2, interacts with spdya. Interacts with nap1l1. Interacts with nanos1.

It localises to the cytoplasm. Its subcellular location is the cytoskeleton. The protein resides in the microtubule organizing center. It is found in the centrosome. The protein localises to the nucleus. In terms of biological role, essential for the control of the cell cycle at the G2/M (mitosis) transition. This is G2/mitotic-specific cyclin-B1 (ccnb1) from Xenopus laevis (African clawed frog).